The sequence spans 374 residues: uncharacterized protein (374 aa).

This is an uncharacterized protein from Methanocaldococcus jannaschii (strain ATCC 43067 / DSM 2661 / JAL-1 / JCM 10045 / NBRC 100440) (Methanococcus jannaschii).